Here is a 472-residue protein sequence, read N- to C-terminus: Alanine--anticapsin ligase (472 aa).

Residue Glu-109 coordinates Mg(2+). ATP contacts are provided by Lys-138 and Lys-178. Residues Arg-142–Cys-355 form the ATP-grasp domain. Leu-182 contacts Mg(2+). Residues Ser-184 to Ser-185, Glu-226 to Leu-229, and Gln-268 contribute to the ATP site. Residues Glu-273 and His-309–Glu-311 contribute to the substrate site. 2 residues coordinate Mg(2+): Glu-311 and Glu-324. Arg-328–Gly-331 is a binding site for substrate.

As to quaternary structure, monomer or homodimer. Requires Mg(2+) as cofactor.

The catalysed reaction is L-anticapsin + L-alanine + ATP = bacilysin + ADP + phosphate + H(+). The protein operates within antibiotic biosynthesis; bacilysin biosynthesis. Part of the bacABCDEFG operon responsible for the biosynthesis of bacilysin, an irreversible inactivator of the glutaminase domain of glucosamine synthetase. Catalyzes the formation of alpha-dipeptides from various L-amino acids in the presence of ATP. In vivo catalyzes the ligation of L-alanine and L-anticapsin (epoxycyclohexanonyl-Ala) to produce the final bacilysin antibiotic (L-Ala-L-4S-cyclohexenonyl-Ala dipeptide). This Bacillus amyloliquefaciens (Bacillus velezensis) protein is Alanine--anticapsin ligase.